The primary structure comprises 336 residues: SCP domain-containing protein 1 (336 aa).

Positions 1–18 (MEFKLLLVLCFNIGLICS) are cleaved as a signal peptide. An N-linked (GlcNAc...) asparagine glycan is attached at N47. The segment covering 73–85 (QGGNTAPSSSLPG) has biased composition (polar residues). Residues 73–94 (QGGNTAPSSSLPGVSSMPMPSA) are disordered. An SCP domain is found at 175-292 (LEEHNKFRSD…YCGDMSFIAC (118 aa)). N-linked (GlcNAc...) asparagine glycans are attached at residues N213 and N257.

In terms of tissue distribution, component of the acid-insoluble and acid-soluble organic matrix of calcified layers of the shell (at protein level).

The protein resides in the secreted. In Lottia gigantea (Giant owl limpet), this protein is SCP domain-containing protein 1.